A 455-amino-acid polypeptide reads, in one-letter code: MELKNKKVLVIGLAVTGVPLVRVLKQQGAQIIVNDMKSEVDLAETIDAIGHEQIEYILGRHPEELTTLGELDLVVLSPGVPLDIPFIQQIKAQGIEIIGEVELAFRLSRGKIVAITGTNGKTTTTALTGEIFKGAGKNTYVVGNIGVPFIEKALDTTEEDVIVIEVSSFQLESIKEFHPKVGTLLNLTPDHLNRHKTIENYREAKLNLFMNQSLQDYAVLNYDDITSREAGKTLAAQKIYFSRKQILEEGVFVDNQLITIQTKEKRYDVIHIDEIKILGQHNLENALAATAMTFILGVSAEDIAKGLRNFPGVAHRLEFVEEIEGVKYINDSKGTNTDASIKAIEAAQAPIILLAGGQDKGGDFTDFVKAFDGKVKHLLVYGETSDNIYETALHNNFKVVSQVRDLEEAVIRAKGIAQAGDTILLSPACASWDMYPNFEARGQHFKKLVSSLRRS.

Residue 117–123 (GTNGKTT) coordinates ATP.

It belongs to the MurCDEF family.

It is found in the cytoplasm. It catalyses the reaction UDP-N-acetyl-alpha-D-muramoyl-L-alanine + D-glutamate + ATP = UDP-N-acetyl-alpha-D-muramoyl-L-alanyl-D-glutamate + ADP + phosphate + H(+). It participates in cell wall biogenesis; peptidoglycan biosynthesis. Functionally, cell wall formation. Catalyzes the addition of glutamate to the nucleotide precursor UDP-N-acetylmuramoyl-L-alanine (UMA). The sequence is that of UDP-N-acetylmuramoylalanine--D-glutamate ligase from Alkaliphilus metalliredigens (strain QYMF).